The sequence spans 393 residues: CCA-adding enzyme (393 aa).

Positions 27 and 30 each coordinate ATP. The CTP site is built by Gly27 and Arg30. Mg(2+) is bound by residues Asp40 and Asp42. Residues Arg111, Asp154, Arg157, Arg160, and Arg163 each contribute to the ATP site. CTP is bound by residues Arg111, Asp154, Arg157, Arg160, and Arg163.

This sequence belongs to the tRNA nucleotidyltransferase/poly(A) polymerase family. Bacterial CCA-adding enzyme type 3 subfamily. As to quaternary structure, homodimer. Mg(2+) is required as a cofactor.

It carries out the reaction a tRNA precursor + 2 CTP + ATP = a tRNA with a 3' CCA end + 3 diphosphate. The enzyme catalyses a tRNA with a 3' CCA end + 2 CTP + ATP = a tRNA with a 3' CCACCA end + 3 diphosphate. Catalyzes the addition and repair of the essential 3'-terminal CCA sequence in tRNAs without using a nucleic acid template. Adds these three nucleotides in the order of C, C, and A to the tRNA nucleotide-73, using CTP and ATP as substrates and producing inorganic pyrophosphate. tRNA 3'-terminal CCA addition is required both for tRNA processing and repair. Also involved in tRNA surveillance by mediating tandem CCA addition to generate a CCACCA at the 3' terminus of unstable tRNAs. While stable tRNAs receive only 3'-terminal CCA, unstable tRNAs are marked with CCACCA and rapidly degraded. In Listeria monocytogenes serovar 1/2a (strain ATCC BAA-679 / EGD-e), this protein is CCA-adding enzyme.